Here is a 228-residue protein sequence, read N- to C-terminus: 2,3-bisphosphoglycerate-dependent phosphoglycerate mutase (228 aa).

Residues 8-15 (RHGQSVWN), 21-22 (TG), Arg60, 87-90 (ERHY), Lys98, 114-115 (RR), and 183-184 (GN) each bind substrate. His9 (tele-phosphohistidine intermediate) is an active-site residue. Residue Glu87 is the Proton donor/acceptor of the active site.

This sequence belongs to the phosphoglycerate mutase family. BPG-dependent PGAM subfamily.

The enzyme catalyses (2R)-2-phosphoglycerate = (2R)-3-phosphoglycerate. It participates in carbohydrate degradation; glycolysis; pyruvate from D-glyceraldehyde 3-phosphate: step 3/5. Catalyzes the interconversion of 2-phosphoglycerate and 3-phosphoglycerate. The sequence is that of 2,3-bisphosphoglycerate-dependent phosphoglycerate mutase from Staphylococcus carnosus (strain TM300).